The following is a 435-amino-acid chain: Hyaluronidase-1 (435 aa).

The N-terminal stretch at 1-21 is a signal peptide; sequence MAAHLLPICTLFLNLLSVAQG. Disulfide bonds link C43–C333 and C207–C221. N-linked (GlcNAc...) asparagine glycans are attached at residues N70, N99, N107, and N121. Catalysis depends on E131, which acts as the Proton donor. Residues N216, N256, and N350 are each glycosylated (N-linked (GlcNAc...) asparagine). 3 disulfides stabilise this stretch: C358-C369, C363-C418, and C420-C429. An EGF-like domain is found at 418–429; sequence CRCYPGWRGTWC.

It belongs to the glycosyl hydrolase 56 family. In terms of tissue distribution, highly expressed in spleen, kidney, and lung.

The protein resides in the secreted. The protein localises to the lysosome. The enzyme catalyses Random hydrolysis of (1-&gt;4)-linkages between N-acetyl-beta-D-glucosamine and D-glucuronate residues in hyaluronate.. In terms of biological role, may have a role in promoting tumor progression. May block the TGFB1-enhanced cell growth. This Sus scrofa (Pig) protein is Hyaluronidase-1 (HYAL1).